We begin with the raw amino-acid sequence, 736 residues long: DNA topoisomerase 4 subunit A (736 aa).

The Topo IIA-type catalytic domain maps to 32–496; the sequence is LPDVRDGLKP…SFEQVTLTNQ (465 aa). Tyr-120 acts as the O-(5'-phospho-DNA)-tyrosine intermediate in catalysis.

This sequence belongs to the type II topoisomerase GyrA/ParC subunit family. ParC type 1 subfamily. Heterotetramer composed of ParC and ParE.

Its subcellular location is the cell membrane. It carries out the reaction ATP-dependent breakage, passage and rejoining of double-stranded DNA.. Functionally, topoisomerase IV is essential for chromosome segregation. It relaxes supercoiled DNA. Performs the decatenation events required during the replication of a circular DNA molecule. This is DNA topoisomerase 4 subunit A from Rickettsia bellii (strain RML369-C).